Reading from the N-terminus, the 452-residue chain is Plasmepsin I (452 aa).

Over 1–37 (MALSIKEDFSSAFAKNESAVNSSTFNNNMKTWKIQKR) the chain is Cytoplasmic. A propeptide spanning residues 1–123 (MALSIKEDFS…TGLTQKPHLG (123 aa)) is cleaved from the precursor. A helical; Signal-anchor for type II membrane protein membrane pass occupies residues 38-58 (FQILYVFFFLLITGALFYYLI). The Lumenal portion of the chain corresponds to 59 to 452 (DNVLFPKNKK…VGFALAKKKL (394 aa)). In terms of domain architecture, Peptidase A1 spans 139–446 (YYGEAQIGDN…DYDNHTVGFA (308 aa)). The active site involves Asp-157. An intrachain disulfide couples Cys-170 to Cys-175. Asp-337 is a catalytic residue. An intrachain disulfide couples Cys-372 to Cys-408.

It belongs to the peptidase A1 family. Post-translationally, not N-glycosylated. Proteolytically cleaved into the soluble active mature form in the digestive vacuole by cysteine protease falcipains; the process begins at the early ring stage. Proteolysis requires an acidic environment.

Its subcellular location is the membrane. The protein localises to the vacuole lumen. The protein resides in the vacuole membrane. The catalysed reaction is Hydrolysis of the 33-Phe-|-Leu-34 bond in the alpha-chain of hemoglobin, leading to denaturation of molecule.. With respect to regulation, inhibited by KNI derived compounds KNI-10333 and to a lesser extent KNI-10743. During the asexual blood stage, catalyzes the initial cleavage of native host hemoglobin (Hb) resulting in Hb denaturation; specifically cleaves between Phe-33 and Leu-34 of Hb alpha-chain. Digestion of host Hb is an essential step which provides the parasite with amino acids for protein synthesis, and regulates osmolarity. The sequence is that of Plasmepsin I from Plasmodium falciparum (isolate 3D7).